Here is a 56-residue protein sequence, read N- to C-terminus: Large ribosomal subunit protein bL32 (56 aa).

Residues 1 to 16 (MAVQKNKKSRSKRGMR) are compositionally biased toward basic residues. The tract at residues 1 to 36 (MAVQKNKKSRSKRGMRRSHDSLSTPQLSVDSTSGEL) is disordered. The span at 21 to 34 (SLSTPQLSVDSTSG) shows a compositional bias: polar residues.

The protein belongs to the bacterial ribosomal protein bL32 family.

The sequence is that of Large ribosomal subunit protein bL32 from Shewanella sediminis (strain HAW-EB3).